The following is a 2555-amino-acid chain: Squalestatin hexaketide synthase clz14 (2555 aa).

The segment at 1–84 (MDVSKEAGHH…PNATSTTTTT (84 aa)) is disordered. Over residues 10–84 (HANGFANGNT…PNATSTTTTT (75 aa)) the composition is skewed to low complexity. The Ketosynthase family 3 (KS3) domain maps to 91 to 511 (QVPVAICGIG…GSNTHIIIDS (421 aa)). Active-site for beta-ketoacyl synthase activity residues include Cys261, His398, and His435. Residues 611–928 (FIFTGQGAQW…LEGIGKLFCF (318 aa)) are malonyl-CoA:ACP transacylase (MAT) domain. The tract at residues 975–1104 (HELLGERSLE…GLVTASVVTS (130 aa)) is N-terminal hotdog fold. A dehydratase (DH) domain region spans residues 975-1256 (HELLGERSLE…RGFKCKKTDD (282 aa)). The region spanning 975-1260 (HELLGERSLE…CKKTDDAFIQ (286 aa)) is the PKS/mFAS DH domain. His1007 (proton acceptor; for dehydratase activity) is an active-site residue. The C-terminal hotdog fold stretch occupies residues 1117–1260 (SRKVDTSRWY…CKKTDDAFIQ (144 aa)). Asp1177 (proton donor; for dehydratase activity) is an active-site residue. The tract at residues 1424–1595 (SFFQAAGLNK…GFEGAGTVVL (172 aa)) is methyltransferase (CMet) domain. Residues 1821–2141 (GMLNTLHWVG…RGVHMGRIVV (321 aa)) are enoyl reductase (ER) (ER) domain. The tract at residues 2165–2338 (STYLLTGGMG…PASVIDIAAI (174 aa)) is ketoreductase (KR) domain. The 79-residue stretch at 2468 to 2546 (IIFAQEIAKR…SLGRLATKRL (79 aa)) folds into the Carrier domain. Ser2505 is subject to O-(pantetheine 4'-phosphoryl)serine.

It participates in secondary metabolite biosynthesis. Functionally, highly reducing polyketide synthase (HR-PKS); part of the gene cluster that mediates the biosynthesis of squalestatin S1 (SQS1, also known as zaragozic acid A), a heavily oxidized fungal polyketide that offers potent cholesterol lowering activity by targeting squalene synthase (SS). SQS1 is composed of a 2,8-dioxobicyclic[3.2.1]octane-3,4,5-tricarboxyclic acid core that is connected to two lipophilic polyketide arms. These initial steps feature the priming of an unusual benzoic acid starter unit onto the highly reducing polyketide synthase clz14, followed by oxaloacetate extension and product release to generate a tricarboxylic acid containing product. The phenylalanine ammonia lyase (PAL) clz10 and the acyl-CoA ligase clz12 are involved in transforming phenylalanine into benzoyl-CoA. The citrate synthase-like protein clz17 is involved in connecting the C-alpha-carbons of the hexaketide chain and oxaloacetate to afford the tricarboxylic acid unit. The potential hydrolytic enzymes, clz11 and clz13, are in close proximity to pks2 and may participate in product release. On the other side, the tetraketide arm is synthesized by a the squalestatin tetraketide synthase clz2 and enzymatically esterified to the core in the last biosynthetic step, by the acetyltransferase clz6. The biosynthesis of the tetraketide must involve 3 rounds of chain extension. After the first and second rounds methyl-transfer occurs, and in all rounds of extension the ketoreductase and dehydratase are active. The enoyl reductase and C-MeT of clz2 are not active in the final round of extension. The acetyltransferase clz6 appears to have a broad substrate selectivity for its acyl CoA substrate, allowing the in vitro synthesis of novel squalestatins. The biosynthesis of SQS1 requires several oxidative steps likely performed by oxidoreductases clz3, clz15 and clz16. Finally, in support of the identification of the cluster as being responsible for SQS1 production, the cluster contains a gene encoding a putative squalene synthase (SS) clz20, suggesting a likely mechanism for self-resistance. This Cochliobolus lunatus (Filamentous fungus) protein is Squalestatin hexaketide synthase clz14.